A 237-amino-acid polypeptide reads, in one-letter code: Ribosomal RNA small subunit methyltransferase G (237 aa).

S-adenosyl-L-methionine is bound by residues glycine 78, phenylalanine 83, 129-130 (AE), and arginine 148.

Belongs to the methyltransferase superfamily. RNA methyltransferase RsmG family.

The protein localises to the cytoplasm. In terms of biological role, specifically methylates the N7 position of a guanine in 16S rRNA. This is Ribosomal RNA small subunit methyltransferase G from Streptococcus pyogenes serotype M49 (strain NZ131).